The sequence spans 203 residues: Anti-sigma-W factor RsiW (203 aa).

Residues 1–86 lie on the Cytoplasmic side of the membrane; sequence MECPKEIVLL…TARLRRFLHR (86 aa). Residues His30, Cys34, and Cys37 each coordinate Zn(2+). A helical membrane pass occupies residues 87 to 103; it reads HPLLTAASLFLALTLGS. Residues 104 to 203 are Extracellular-facing; the sequence is LASSWGERGA…RFNRALQSIE (100 aa).

This sequence belongs to the zinc-associated anti-sigma factor (ZAS) superfamily. Anti-sigma-W factor family. Requires Zn(2+) as cofactor. In terms of processing, is processed by three successive proteolytic events. First, the extracellular region of RsiW is cleaved by PrsW (Site-1 cleavage) in response to cell envelope stresses. Next, it undergoes cleavage at an intramembrane site (Site-2 cleavage) mediated by RasP. This cleavage uncovers a cryptic proteolytic tag with conserved alanine residues in the transmembrane segment, that is recognized mainly by the ClpXP protease, which completely degrades the protein in the cytoplasm and leads to the induction of the sigma-W-controlled genes.

It localises to the membrane. In terms of biological role, is the anti-sigma factor for SigW. The presence of RsiW leads to the inactivation of SigW, and its proteolytic destruction to sigma-W activation. The protein is Anti-sigma-W factor RsiW (rsiW) of Geobacillus kaustophilus (strain HTA426).